The primary structure comprises 179 residues: Large ribosomal subunit protein uL5 (179 aa).

The protein belongs to the universal ribosomal protein uL5 family. As to quaternary structure, part of the 50S ribosomal subunit; part of the 5S rRNA/L5/L18/L25 subcomplex. Contacts the 5S rRNA and the P site tRNA. Forms a bridge to the 30S subunit in the 70S ribosome.

Functionally, this is one of the proteins that bind and probably mediate the attachment of the 5S RNA into the large ribosomal subunit, where it forms part of the central protuberance. In the 70S ribosome it contacts protein S13 of the 30S subunit (bridge B1b), connecting the 2 subunits; this bridge is implicated in subunit movement. Contacts the P site tRNA; the 5S rRNA and some of its associated proteins might help stabilize positioning of ribosome-bound tRNAs. This Xylella fastidiosa (strain M23) protein is Large ribosomal subunit protein uL5.